Reading from the N-terminus, the 231-residue chain is Platelet-activating factor acetylhydrolase IB subunit alpha1 (231 aa).

Ser-2 carries the N-acetylserine modification. Ser-2 carries the post-translational modification Phosphoserine. Active-site residues include Ser-47, Asp-192, and His-195.

It belongs to the 'GDSL' lipolytic enzyme family. Platelet-activating factor acetylhydrolase IB beta/gamma subunits subfamily. As to quaternary structure, forms a catalytic dimer which is either homodimer (alpha1/alpha1 homodimer) or heterodimer with PAFAH1B2 (alpha1/alpha2 heterodimer). Component of the cytosolic (PAF-AH (I)) heterotetrameric enzyme, which is composed of PAFAH1B1 (beta), PAFAH1B2 (alpha2) and PAFAH1B3 (alpha1) subunits. The catalytic activity of the enzyme resides in the alpha1 (PAFAH1B3) and alpha2 (PAFAH1B2) subunits, whereas the beta subunit (PAFAH1B1) has regulatory activity. Trimer formation is not essential for the catalytic activity. Interacts with VLDLR; this interaction may modulate the Reelin pathway. In terms of tissue distribution, in the adult, expressed in brain, skeletal muscle, kidney, thymus, spleen, colon, testis, ovary and peripheral blood leukocytes. In the fetus, highest expression occurs in brain.

The protein localises to the cytoplasm. The enzyme catalyses a 1-O-alkyl-2-acetyl-sn-glycero-3-phosphocholine + H2O = a 1-O-alkyl-sn-glycero-3-phosphocholine + acetate + H(+). It carries out the reaction 1-O-hexadecyl-2-acetyl-sn-glycero-3-phosphocholine + H2O = 1-O-hexadecyl-sn-glycero-3-phosphocholine + acetate + H(+). It catalyses the reaction 1-O-hexadecyl-2-acetyl-sn-glycero-3-phosphate + H2O = 1-O-hexadecyl-sn-glycero-3-phosphate + acetate + H(+). Beta subunit (PAFAH1B1) inhibits the acetylhydrolase activity of the alpha1/alpha1 catalytic homodimer. Functionally, alpha1 catalytic subunit of the cytosolic type I platelet-activating factor (PAF) acetylhydrolase (PAF-AH (I)) heterotetrameric enzyme that catalyzes the hydrolyze of the acetyl group at the sn-2 position of PAF and its analogs and modulates the action of PAF. The activity and substrate specificity of PAF-AH (I) are affected by its subunit composition. Both alpha1/alpha1 homodimer (PAFAH1B3/PAFAH1B3 homodimer) and alpha1/alpha2 heterodimer(PAFAH1B3/PAFAH1B2 heterodimer) hydrolyze 1-O-alkyl-2-acetyl-sn-glycero-3-phosphoric acid (AAGPA) more efficiently than PAF, but they have little hydrolytic activity towards 1-O-alkyl-2-acetyl-sn-glycero-3-phosphorylethanolamine (AAGPE). Plays an important role during the development of brain. In Homo sapiens (Human), this protein is Platelet-activating factor acetylhydrolase IB subunit alpha1.